Reading from the N-terminus, the 491-residue chain is Monocarboxylate transport permease protein (491 aa).

13 consecutive transmembrane segments (helical) span residues 7 to 27 (GTAL…GFVA), 55 to 75 (WFLV…PALV), 83 to 103 (FFAL…MPVL), 130 to 150 (LAVA…QLVG), 157 to 177 (ALGL…ALYT), 187 to 207 (LIAF…VALI), 246 to 266 (LALG…GIFA), 277 to 297 (AIML…GYMG), 322 to 342 (WFSG…AAVM), 374 to 396 (ITSL…QFAL), 400 to 422 (LLGG…TNWF), 427 to 447 (LLAG…DAGW), and 465 to 485 (GLLA…LLPA).

The protein belongs to the sodium:solute symporter (SSF) (TC 2.A.21) family.

It is found in the cell membrane. Its activity is regulated as follows. Inhibited by CCCP, but is apparently not affected by the concentration of sodium. In terms of biological role, low-affinity transporter of alanine and high-affinity transporter of lactate and pyruvate. Can also transport other monocarboxylates such as propionate, butyrate, alpha-hydroxybutyrate or acetate. May be proton coupled. Required for optimal growth on alanine or pyruvate and ammonia. This Rhizobium johnstonii (strain DSM 114642 / LMG 32736 / 3841) (Rhizobium leguminosarum bv. viciae) protein is Monocarboxylate transport permease protein.